We begin with the raw amino-acid sequence, 256 residues long: Small ribosomal subunit protein bS18m (256 aa).

The disordered stretch occupies residues 19 to 106 (GQRTAQFSTT…GGQRYGSNSQ (88 aa)). Positions 21–30 (RTAQFSTTSP) are enriched in polar residues. Low complexity predominate over residues 44 to 66 (NAPRTNTNTSSPSSNNNNNAGSS).

It belongs to the bacterial ribosomal protein bS18 family. In terms of assembly, component of the mitochondrial small ribosomal subunit (mt-SSU). Mature N.crassa 74S mitochondrial ribosomes consist of a small (37S) and a large (54S) subunit. The 37S small subunit contains a 16S ribosomal RNA (16S mt-rRNA) and 32 different proteins. The 54S large subunit contains a 23S rRNA (23S mt-rRNA) and 42 different proteins.

Its subcellular location is the mitochondrion. Functionally, component of the mitochondrial ribosome (mitoribosome), a dedicated translation machinery responsible for the synthesis of mitochondrial genome-encoded proteins, including at least some of the essential transmembrane subunits of the mitochondrial respiratory chain. The mitoribosomes are attached to the mitochondrial inner membrane and translation products are cotranslationally integrated into the membrane. In Neurospora crassa (strain ATCC 24698 / 74-OR23-1A / CBS 708.71 / DSM 1257 / FGSC 987), this protein is Small ribosomal subunit protein bS18m (rsm18).